The primary structure comprises 121 residues: ATP synthase epsilon chain (121 aa).

The protein belongs to the ATPase epsilon chain family. As to quaternary structure, F-type ATPases have 2 components, CF(1) - the catalytic core - and CF(0) - the membrane proton channel. CF(1) has five subunits: alpha(3), beta(3), gamma(1), delta(1), epsilon(1). CF(0) has three main subunits: a, b and c.

It localises to the cell membrane. Produces ATP from ADP in the presence of a proton gradient across the membrane. This Mycolicibacterium vanbaalenii (strain DSM 7251 / JCM 13017 / BCRC 16820 / KCTC 9966 / NRRL B-24157 / PYR-1) (Mycobacterium vanbaalenii) protein is ATP synthase epsilon chain.